The chain runs to 379 residues: Homoserine O-acetyltransferase (379 aa).

The AB hydrolase-1 domain maps to asparagine 52–glutamate 356. Serine 157 acts as the Nucleophile in catalysis. A substrate-binding site is contributed by arginine 227. Active-site residues include aspartate 320 and histidine 350. Aspartate 351 lines the substrate pocket.

The protein belongs to the AB hydrolase superfamily. MetX family. As to quaternary structure, homodimer.

It localises to the cytoplasm. The catalysed reaction is L-homoserine + acetyl-CoA = O-acetyl-L-homoserine + CoA. Its pathway is amino-acid biosynthesis; L-methionine biosynthesis via de novo pathway; O-acetyl-L-homoserine from L-homoserine: step 1/1. Transfers an acetyl group from acetyl-CoA to L-homoserine, forming acetyl-L-homoserine. This Mycobacterium marinum (strain ATCC BAA-535 / M) protein is Homoserine O-acetyltransferase.